Consider the following 459-residue polypeptide: tRNA modification GTPase MnmE (459 aa).

(6S)-5-formyl-5,6,7,8-tetrahydrofolate is bound by residues Arg23, Glu86, and Arg125. One can recognise a TrmE-type G domain in the interval Gly221–Val380. Asn231 contributes to the K(+) binding site. GTP contacts are provided by residues Asn231–Ser236, Thr250–Thr256, and Asp275–Gly278. Ser235 contributes to the Mg(2+) binding site. Residues Thr250, Ile252, and Thr255 each coordinate K(+). Mg(2+) is bound at residue Thr256. Lys459 is a (6S)-5-formyl-5,6,7,8-tetrahydrofolate binding site.

It belongs to the TRAFAC class TrmE-Era-EngA-EngB-Septin-like GTPase superfamily. TrmE GTPase family. As to quaternary structure, homodimer. Heterotetramer of two MnmE and two MnmG subunits. Requires K(+) as cofactor.

The protein localises to the cytoplasm. Exhibits a very high intrinsic GTPase hydrolysis rate. Involved in the addition of a carboxymethylaminomethyl (cmnm) group at the wobble position (U34) of certain tRNAs, forming tRNA-cmnm(5)s(2)U34. This is tRNA modification GTPase MnmE from Acetivibrio thermocellus (strain ATCC 27405 / DSM 1237 / JCM 9322 / NBRC 103400 / NCIMB 10682 / NRRL B-4536 / VPI 7372) (Clostridium thermocellum).